The sequence spans 366 residues: Ferredoxin--NADP reductase, leaf isozyme 2, chloroplastic (366 aa).

The transit peptide at 1–48 (MAAVNTVSSLPCSKAGAAVAGGAPRPSTCSVFYPPRCWSKRSSGNGVR) directs the protein to the chloroplast. In terms of domain architecture, FAD-binding FR-type spans 87–209 (KEPYTGRCLL…TGPVGKEMLM (123 aa)). Residues 145-148 (RLYS), 166-168 (CVK), Tyr172, and 183-185 (VCS) each bind FAD. Residues Ser148 and Lys168 each contribute to the NADP(+) site. Cys184 and Cys189 are disulfide-bonded. Ser185 bears the Phosphoserine mark. Thr216 carries the post-translational modification Phosphothreonine. An FAD-binding site is contributed by Thr224. NADP(+)-binding positions include Thr224, 256–257 (VP), 286–287 (SR), Lys296, 325–326 (GL), and Glu364.

This sequence belongs to the ferredoxin--NADP reductase type 1 family. As to quaternary structure, heterodimer with LFNR1. Component of high molecular weight thylakoid LFNRs-containing protein complexes containing LIR1, LFNR1, LFNR2, TIC62 and TROL proteins. Interacts directly with LIR1 and TIC62; LIR1 increases the affinity of LFNR1 and LFNR2 for TIC62. FAD is required as a cofactor. In terms of processing, may form interchain disulfide bonds with LIR1.

The protein resides in the plastid. It is found in the chloroplast stroma. The protein localises to the chloroplast thylakoid membrane. It catalyses the reaction 2 reduced [2Fe-2S]-[ferredoxin] + NADP(+) + H(+) = 2 oxidized [2Fe-2S]-[ferredoxin] + NADPH. It functions in the pathway energy metabolism; photosynthesis. Its function is as follows. Plays a key role in regulating the relative amounts of cyclic and non-cyclic electron flow to meet the demands of the plant for ATP and reducing power. This chain is Ferredoxin--NADP reductase, leaf isozyme 2, chloroplastic, found in Oryza sativa subsp. japonica (Rice).